Consider the following 362-residue polypeptide: Meiotic recombination protein SPO11-1 (362 aa).

The 135-residue stretch at S8–L142 folds into the Topo IIA-type catalytic domain. The O-(5'-phospho-DNA)-tyrosine intermediate role is filled by Y103. E189 and D241 together coordinate Mg(2+).

Belongs to the TOP6A family. As to quaternary structure, heterotetramer of 2 SPO11 (SPO11-1 and/or SPO11-2) and 2 MTOPVIB chains. Interacts with MTOPVIB. May form a heterodimer with SPO11-2. Interacts with PRD1. Does not interact with TOP6B. Requires Mg(2+) as cofactor. Expressed in shoots, young seedlings, flowers and reproductive tissues. Not found in roots or rosette leaves.

Its subcellular location is the nucleus. It carries out the reaction ATP-dependent breakage, passage and rejoining of double-stranded DNA.. Component of a topoisomerase 6 complex specifically required for meiotic recombination. Together with MTOPVIB, mediates DNA cleavage that forms the double-strand breaks (DSB) that initiate meiotic recombination. The complex promotes relaxation of negative and positive supercoiled DNA and DNA decatenation through cleavage and ligation cycles. This chain is Meiotic recombination protein SPO11-1, found in Arabidopsis thaliana (Mouse-ear cress).